Consider the following 617-residue polypeptide: 5-hydroxytryptamine receptor 2B (617 aa).

Residues Met1–Val95 lie on the Extracellular side of the membrane. N-linked (GlcNAc...) asparagine glycosylation is found at Asn31, Asn41, Asn51, and Asn58. A helical membrane pass occupies residues Val96–Ile116. The Cytoplasmic portion of the chain corresponds to Leu117 to Leu128. A helical membrane pass occupies residues Val129–Val149. The Extracellular portion of the chain corresponds to Tyr150–Asp164. Cysteines 163 and 242 form a disulfide. The helical transmembrane segment at Ile165–Ala185 threads the bilayer. Topologically, residues Ala186 to Arg205 are cytoplasmic. Residues Val206–Phe226 form a helical membrane-spanning segment. Residues Gly227–Cys256 lie on the Extracellular side of the membrane. A helical membrane pass occupies residues Cys257 to Ala277. At Arg278–Gln534 the chain is on the cytoplasmic side. The tract at residues Arg309–Leu336 is disordered. The span at Lys317 to Val327 shows a compositional bias: basic and acidic residues. Residues Thr535–Leu555 form a helical membrane-spanning segment. Residues Thr556–Ala570 lie on the Extracellular side of the membrane. A helical transmembrane segment spans residues Ser571–Phe591. Residues Asn592–Ile617 lie on the Cytoplasmic side of the membrane.

This sequence belongs to the G-protein coupled receptor 1 family.

It is found in the cell membrane. Its function is as follows. This is one of the several different receptors for 5-hydroxytryptamine (serotonin), a biogenic hormone that functions as a neurotransmitter, a hormone, and a mitogen. The activity of this receptor is mediated by G proteins which inhibit adenylate cyclase. In Drosophila melanogaster (Fruit fly), this protein is 5-hydroxytryptamine receptor 2B (5-HT1B).